The following is an 800-amino-acid chain: Aldehyde dehydrogenase family 16 member A1 (800 aa).

The protein belongs to the aldehyde dehydrogenase family. As to quaternary structure, interacts with SPG21.

The chain is Aldehyde dehydrogenase family 16 member A1 (ALDH16A1) from Bos taurus (Bovine).